A 559-amino-acid polypeptide reads, in one-letter code: Branched-chain-amino-acid aminotransferase-like protein 2 (559 aa).

This sequence belongs to the class-IV pyridoxal-phosphate-dependent aminotransferase family.

This is Branched-chain-amino-acid aminotransferase-like protein 2 from Arabidopsis thaliana (Mouse-ear cress).